The sequence spans 468 residues: ATP synthase subunit beta 2 (468 aa).

145–152 (GGAGVGKT) is an ATP binding site.

This sequence belongs to the ATPase alpha/beta chains family. F-type ATPases have 2 components, CF(1) - the catalytic core - and CF(0) - the membrane proton channel. CF(1) has five subunits: alpha(3), beta(3), gamma(1), delta(1), epsilon(1). CF(0) has three main subunits: a(1), b(2) and c(9-12). The alpha and beta chains form an alternating ring which encloses part of the gamma chain. CF(1) is attached to CF(0) by a central stalk formed by the gamma and epsilon chains, while a peripheral stalk is formed by the delta and b chains.

The protein localises to the cell membrane. The catalysed reaction is ATP + H2O + 4 H(+)(in) = ADP + phosphate + 5 H(+)(out). Produces ATP from ADP in the presence of a proton gradient across the membrane. The catalytic sites are hosted primarily by the beta subunits. In Mycoplasmopsis pulmonis (strain UAB CTIP) (Mycoplasma pulmonis), this protein is ATP synthase subunit beta 2.